The primary structure comprises 321 residues: MLPADAVNRHSCEKNLYVGVCKLTLPMKQLWWVVYIIDTVLVYLVIPFRDLLLRERPGEDCDTKGKERPLVGGDTPHSLLPPLGNSLSYADFTVKRPGRWRSPMILAHSMQRLRACFSLSSNVTLMLIRLDLWLKLRGLCVFPTYVIALSILFTMFGGVRIATLPLSLIFAFKNRPKCVMALQEATDLAKSSNVLKKVTLGLQREERGGKKGRKLRKNVKKVQQEDTSWALTVLFYLAKLVFGILGLALSIIWLLHILVFMLVNPPAFPFLNQVFIQLDSAGDLLGTTPFAIFCYYFVMSVISGEMHLGMKLLFLSIHPMK.

The next 5 membrane-spanning stretches (helical) occupy residues 28 to 48 (KQLW…VIPF), 116 to 133 (CFSL…LDLW), 139 to 159 (LCVF…FGGV), 240 to 260 (LVFG…ILVF), and 284 to 304 (LLGT…VISG).

The protein belongs to the LIMR family.

It localises to the membrane. The polypeptide is LIMR family protein SELMODRAFT_432210 (Selaginella moellendorffii (Spikemoss)).